Reading from the N-terminus, the 94-residue chain is MLKVNEYFDGNVKSIGFEQKGDKATVGVMEAGDYQFNTAAPERMTVVKGALTIQLADEDEWHTYSQGQSFEVAGHSSFKLEVKTPTAYLCEFLD.

This sequence belongs to the nucleoside phosphorylase PpnP family.

It catalyses the reaction a purine D-ribonucleoside + phosphate = a purine nucleobase + alpha-D-ribose 1-phosphate. The catalysed reaction is adenosine + phosphate = alpha-D-ribose 1-phosphate + adenine. It carries out the reaction cytidine + phosphate = cytosine + alpha-D-ribose 1-phosphate. The enzyme catalyses guanosine + phosphate = alpha-D-ribose 1-phosphate + guanine. It catalyses the reaction inosine + phosphate = alpha-D-ribose 1-phosphate + hypoxanthine. The catalysed reaction is thymidine + phosphate = 2-deoxy-alpha-D-ribose 1-phosphate + thymine. It carries out the reaction uridine + phosphate = alpha-D-ribose 1-phosphate + uracil. The enzyme catalyses xanthosine + phosphate = alpha-D-ribose 1-phosphate + xanthine. Functionally, catalyzes the phosphorolysis of diverse nucleosides, yielding D-ribose 1-phosphate and the respective free bases. Can use uridine, adenosine, guanosine, cytidine, thymidine, inosine and xanthosine as substrates. Also catalyzes the reverse reactions. In Aeromonas salmonicida (strain A449), this protein is Pyrimidine/purine nucleoside phosphorylase.